Here is a 283-residue protein sequence, read N- to C-terminus: Putative sugar uptake protein BA_0200/GBAA_0200/BAS0200 (283 aa).

10 helical membrane-spanning segments follow: residues 4-21 (LLAL…LVSV), 26-48 (GAYS…MYVF), 52-71 (ALTM…WALG), 84-106 (VSTT…GVIA), 110-132 (WTTT…GVVF), 151-173 (LLTL…WYNI), 178-195 (AILP…VLTS), 208-230 (ALSG…RVGV), 234-253 (FPLS…VFLG), and 260-279 (QLIF…VLLG).

The protein belongs to the GRP transporter (TC 2.A.7.5) family.

It localises to the cell membrane. This is Putative sugar uptake protein BA_0200/GBAA_0200/BAS0200 from Bacillus anthracis.